The primary structure comprises 323 residues: Aldo-keto reductase family 1 member C4 (323 aa).

NADP(+)-binding positions include 20–24 (GFGSY) and Asp-50. Residue Tyr-55 is the Proton donor of the active site. Residue His-117 coordinates substrate. NADP(+) is bound by residues 166–167 (SN), Gln-190, 216–221 (HSALGT), and 270–280 (KSYNEQRIREN).

It belongs to the aldo/keto reductase family. Monomer. High expression in liver. Also expressed in kidney.

It localises to the cytoplasm. The protein resides in the cytosol. It carries out the reaction chlordecone alcohol + NADP(+) = chlordecone + NADPH + H(+). The catalysed reaction is a 3alpha-hydroxysteroid + NADP(+) = a 3-oxosteroid + NADPH + H(+). The enzyme catalyses a 3alpha-hydroxysteroid + NAD(+) = a 3-oxosteroid + NADH + H(+). It catalyses the reaction 5alpha-androstane-3alpha,17beta-diol + NADP(+) = 17beta-hydroxy-5alpha-androstan-3-one + NADPH + H(+). It carries out the reaction 5alpha-androstane-3beta,17beta-diol + NADP(+) = 17beta-hydroxy-5alpha-androstan-3-one + NADPH + H(+). The catalysed reaction is 5alpha-androstane-3alpha,17beta-diol + NAD(+) = 17beta-hydroxy-5alpha-androstan-3-one + NADH + H(+). The enzyme catalyses 17beta-estradiol + NADP(+) = estrone + NADPH + H(+). It catalyses the reaction 17beta-estradiol + NAD(+) = estrone + NADH + H(+). It carries out the reaction (20S)-hydroxypregn-4-en-3-one + NADP(+) = progesterone + NADPH + H(+). The catalysed reaction is (20S)-hydroxypregn-4-en-3-one + NAD(+) = progesterone + NADH + H(+). The enzyme catalyses androsterone + NADP(+) = 5alpha-androstan-3,17-dione + NADPH + H(+). It catalyses the reaction testosterone + NADP(+) = androst-4-ene-3,17-dione + NADPH + H(+). It carries out the reaction testosterone + NAD(+) = androst-4-ene-3,17-dione + NADH + H(+). The catalysed reaction is 3alpha-hydroxy-5alpha-androstane 17-O-(beta-D-glucuronate) + NADP(+) = 5alpha-dihydrotestosterone 17-O-(beta-D-glucuronate) + NADPH + H(+). The enzyme catalyses (3beta,5alpha,17beta)-3-hydroxy-androstan-17-yl sulfate + NADP(+) = 5alpha-dihydrotestosterone sulfate + NADPH + H(+). It catalyses the reaction 5alpha-androstane-3alpha,17beta-diol + NAD(+) = androsterone + NADH + H(+). It functions in the pathway steroid metabolism. With respect to regulation, potently inhibited by benzbromarone, 3',3'',5',5''-tetrabromophenolphthalein (TBPP) and o-cresolphthalein. Cytosolic aldo-keto reductase that catalyzes the NADH and NADPH-dependent reduction of ketosteroids to hydroxysteroids. Liver specific enzyme that acts as an NAD(P)(H)-dependent 3-, 17- and 20-ketosteroid reductase on the steroid nucleus and side chain. Displays the ability to catalyze both oxidation and reduction in vitro, but most probably acts as a reductase in vivo since the oxidase activity measured in vitro is inhibited by physiological concentration of NADPH. Acts preferentially as a 3-alpha-hydroxysteroid dehydrogenase (HSD) with a subsidiary 3-beta-HSD activity. Catalyzes efficiently the transformation of the potent androgen 5-alpha-dihydrotestosterone (5alpha-DHT or 17beta-hydroxy-5alpha-androstan-3-one) into the less active form, 5-alpha-androstan-3-alpha,17-beta-diol (3-alpha-diol). Catalyzes the reduction of estrone into 17beta-estradiol but with low efficiency. Metabolizes a broad spectrum of natural and synthetic therapeutic steroid and plays an important role in metabolism of androgens, estrogens, progestereone and conjugated steroids. Catalyzes the biotransformation of the pesticide chlordecone (kepone) to its corresponding alcohol leading to increased biliary excretion of the pesticide and concomitant reduction of its neurotoxicity since bile is the major excretory route. The polypeptide is Aldo-keto reductase family 1 member C4 (AKR1C4) (Macaca fuscata fuscata (Japanese macaque)).